We begin with the raw amino-acid sequence, 285 residues long: NADPH-dependent 7-cyano-7-deazaguanine reductase (285 aa).

91 to 93 (IES) provides a ligand contact to substrate. 93 to 94 (SK) contacts NADPH. The active-site Thioimide intermediate is cysteine 193. Aspartate 200 functions as the Proton donor in the catalytic mechanism. 232-233 (HE) lines the substrate pocket. 261-262 (RG) provides a ligand contact to NADPH.

Belongs to the GTP cyclohydrolase I family. QueF type 2 subfamily. As to quaternary structure, homodimer.

Its subcellular location is the cytoplasm. It carries out the reaction 7-aminomethyl-7-carbaguanine + 2 NADP(+) = 7-cyano-7-deazaguanine + 2 NADPH + 3 H(+). It functions in the pathway tRNA modification; tRNA-queuosine biosynthesis. Its function is as follows. Catalyzes the NADPH-dependent reduction of 7-cyano-7-deazaguanine (preQ0) to 7-aminomethyl-7-deazaguanine (preQ1). The polypeptide is NADPH-dependent 7-cyano-7-deazaguanine reductase (Shewanella frigidimarina (strain NCIMB 400)).